A 347-amino-acid polypeptide reads, in one-letter code: Methionine import ATP-binding protein MetN (347 aa).

The ABC transporter domain maps to I2–L241. G38 to S45 contributes to the ATP binding site.

It belongs to the ABC transporter superfamily. Methionine importer (TC 3.A.1.24) family. As to quaternary structure, the complex is composed of two ATP-binding proteins (MetN), two transmembrane proteins (MetI) and a solute-binding protein (MetQ).

It localises to the cell inner membrane. It catalyses the reaction L-methionine(out) + ATP + H2O = L-methionine(in) + ADP + phosphate + H(+). It carries out the reaction D-methionine(out) + ATP + H2O = D-methionine(in) + ADP + phosphate + H(+). In terms of biological role, part of the ABC transporter complex MetNIQ involved in methionine import. Responsible for energy coupling to the transport system. This is Methionine import ATP-binding protein MetN from Chromohalobacter salexigens (strain ATCC BAA-138 / DSM 3043 / CIP 106854 / NCIMB 13768 / 1H11).